We begin with the raw amino-acid sequence, 149 residues long: Secreted RxLR effector protein 3 (149 aa).

An N-terminal signal peptide occupies residues 1-23 (MRASTILFVLGAAILAVIGVTTA). The short motif at 38-53 (RLLRSGSMEQEPDEER) is the RxLR-dEER element.

Belongs to the RxLR effector family.

It localises to the secreted. The protein resides in the host nucleus. It is found in the host cytoplasm. Secreted effector that completely suppresses the host cell death induced by cell death-inducing proteins. This chain is Secreted RxLR effector protein 3, found in Plasmopara viticola (Downy mildew of grapevine).